A 484-amino-acid chain; its full sequence is tRNA sulfurtransferase (484 aa).

The THUMP domain maps to 63-167 (ERLVEALKCI…NKDLFIVTQR (105 aa)). Residues 185-186 (LM), K267, G289, and Q298 contribute to the ATP site. Cysteines 346 and 458 form a disulfide. Positions 406 to 484 (IPENAVVVDI…GFKNVKVYRP (79 aa)) constitute a Rhodanese domain. C458 serves as the catalytic Cysteine persulfide intermediate.

The protein belongs to the ThiI family.

Its subcellular location is the cytoplasm. The enzyme catalyses [ThiI sulfur-carrier protein]-S-sulfanyl-L-cysteine + a uridine in tRNA + 2 reduced [2Fe-2S]-[ferredoxin] + ATP + H(+) = [ThiI sulfur-carrier protein]-L-cysteine + a 4-thiouridine in tRNA + 2 oxidized [2Fe-2S]-[ferredoxin] + AMP + diphosphate. The catalysed reaction is [ThiS sulfur-carrier protein]-C-terminal Gly-Gly-AMP + S-sulfanyl-L-cysteinyl-[cysteine desulfurase] + AH2 = [ThiS sulfur-carrier protein]-C-terminal-Gly-aminoethanethioate + L-cysteinyl-[cysteine desulfurase] + A + AMP + 2 H(+). Its pathway is cofactor biosynthesis; thiamine diphosphate biosynthesis. Catalyzes the ATP-dependent transfer of a sulfur to tRNA to produce 4-thiouridine in position 8 of tRNAs, which functions as a near-UV photosensor. Also catalyzes the transfer of sulfur to the sulfur carrier protein ThiS, forming ThiS-thiocarboxylate. This is a step in the synthesis of thiazole, in the thiamine biosynthesis pathway. The sulfur is donated as persulfide by IscS. This Colwellia psychrerythraea (strain 34H / ATCC BAA-681) (Vibrio psychroerythus) protein is tRNA sulfurtransferase.